Reading from the N-terminus, the 455-residue chain is uncharacterized protein (455 aa).

12 consecutive transmembrane segments (helical) span residues 19 to 39 (FSLF…MFMG), 63 to 83 (ILNL…VIIS), 106 to 126 (FFIS…LLHM), 140 to 160 (FLQV…FSAI), 173 to 195 (VTIG…LFGF), 200 to 222 (VAGV…IVIV), 265 to 285 (MIVT…KVYT), 288 to 308 (ITMF…ILIG), 324 to 344 (MKSL…MTIF), 348 to 368 (LIGL…LIAM), 388 to 408 (AAGD…GIGL), and 410 to 430 (LAYL…ISFI).

Belongs to the multi antimicrobial extrusion (MATE) (TC 2.A.66.1) family.

The protein localises to the cell membrane. This is an uncharacterized protein from Bacillus subtilis (strain 168).